A 724-amino-acid polypeptide reads, in one-letter code: Probable ATP-dependent RNA helicase DDX4 (724 aa).

Positions methionine 1–isoleucine 11 are enriched in acidic residues. Disordered regions lie at residues methionine 1–glutamate 25 and serine 37–arginine 241. Positions serine 108 to arginine 130 are enriched in basic and acidic residues. Over residues glutamate 168 to threonine 182 the composition is skewed to polar residues. The Q motif signature appears at leucine 286–lysine 314. A Helicase ATP-binding domain is found at isoleucine 317–phenylalanine 500. ATP is bound at residue alanine 330–threonine 337. Residues aspartate 444–aspartate 447 carry the DEAD box motif. The region spanning aspartate 512–alanine 675 is the Helicase C-terminal domain. Positions alanine 683–alanine 692 are enriched in polar residues. A disordered region spans residues alanine 683–glycine 724. The segment covering serine 693–glycine 704 has biased composition (basic and acidic residues). Residues aspartate 705–alanine 715 are compositionally biased toward polar residues.

The protein belongs to the DEAD box helicase family. DDX4/VASA subfamily.

Its subcellular location is the cytoplasm. The enzyme catalyses ATP + H2O = ADP + phosphate + H(+). Functionally, probable ATP-dependent RNA helicase required during spermatogenesis to repress transposable elements and preventing their mobilization, which is essential for the germline integrity. Acts via the piRNA metabolic process, which mediates the repression of transposable elements during meiosis by forming complexes composed of piRNAs and Piwi proteins and governs the methylation and subsequent repression of transposons. Involved in the secondary piRNAs metabolic process, the production of piRNAs in fetal male germ cells through a ping-pong amplification cycle. In Pelophylax lessonae (Pool frog), this protein is Probable ATP-dependent RNA helicase DDX4.